Here is a 284-residue protein sequence, read N- to C-terminus: MKQKVVSIGDINVANDLPFVLFGGMNVLESRDLAMRICEHYVTVTQKLGIPYVFKASFDKANRSSIHSYRGPGLEEGMKIFQELKQTFGVKIITDVHEPSQAQPVADVVDVIQLPAFLARQTDLVEAMAKTGAVINVKKPQFVSPGQMGNIVDKFKEGGNEKVILCDRGANFGYDNLVVDMLGFSIMKKVSGNSPVIFDVTHALQCRDPFGAASGGRRAQVAELARAGMAVGLAGLFIEAHPDPEHAKCDGPSALPLAKLEPFLKQMKAIDDLVKGFEELDTSK.

This sequence belongs to the KdsA family.

It localises to the cytoplasm. The enzyme catalyses D-arabinose 5-phosphate + phosphoenolpyruvate + H2O = 3-deoxy-alpha-D-manno-2-octulosonate-8-phosphate + phosphate. Its pathway is carbohydrate biosynthesis; 3-deoxy-D-manno-octulosonate biosynthesis; 3-deoxy-D-manno-octulosonate from D-ribulose 5-phosphate: step 2/3. It participates in bacterial outer membrane biogenesis; lipopolysaccharide biosynthesis. The protein is 2-dehydro-3-deoxyphosphooctonate aldolase of Shigella boydii serotype 18 (strain CDC 3083-94 / BS512).